The chain runs to 396 residues: uncharacterized protein (396 aa).

4 residues coordinate [4Fe-4S] cluster: Cys8, Cys14, Cys17, and Cys95. The S-adenosyl-L-methionine site is built by Gln229, Tyr258, Glu279, and Asp325. Residue Cys352 is the Nucleophile of the active site.

This sequence belongs to the class I-like SAM-binding methyltransferase superfamily. RNA M5U methyltransferase family.

This is an uncharacterized protein from Chlamydia trachomatis serovar D (strain ATCC VR-885 / DSM 19411 / UW-3/Cx).